The sequence spans 160 residues: Large ribosomal subunit protein uL13 (160 aa).

Belongs to the universal ribosomal protein uL13 family. As to quaternary structure, part of the 50S ribosomal subunit.

This protein is one of the early assembly proteins of the 50S ribosomal subunit, although it is not seen to bind rRNA by itself. It is important during the early stages of 50S assembly. The chain is Large ribosomal subunit protein uL13 from Orientia tsutsugamushi (strain Ikeda) (Rickettsia tsutsugamushi).